A 324-amino-acid polypeptide reads, in one-letter code: Cuticle collagen sqt-1 (324 aa).

Disordered regions lie at residues 68 to 108 and 129 to 324; these read RRQY…TPNG and SGPK…YRNI. Pro residues predominate over residues 87-97; the sequence is SAPPGQPPAVP. Triple-helical region stretches follow at residues 127 to 153, 171 to 231, and 237 to 299; these read GPSG…PGVG, QGPV…KGRD, and GRPG…PGKD. 2 stretches are compositionally biased toward low complexity: residues 129–156 and 177–201; these read SGPK…GADD and PGAL…PGRD. Residues 227–236 show a composition bias toward basic and acidic residues; that stretch reads EKGRDAEHPI.

This sequence belongs to the cuticular collagen family. In terms of assembly, collagen polypeptide chains are complexed within the cuticle by disulfide bonds and other types of covalent cross-links.

Nematode cuticles are composed largely of collagen-like proteins. The cuticle functions both as an exoskeleton and as a barrier to protect the worm from its environment. This is a collagen critical for organismal morphogenesis. Mutations in sqt-1 can lengthen, shorten, or helically twist the entire animal. The protein is Cuticle collagen sqt-1 (sqt-1) of Caenorhabditis elegans.